The primary structure comprises 230 residues: CRP-like protein Clp (230 aa).

18–139 contributes to the a nucleoside 3',5'-cyclic phosphate binding site; it reads PSLALDAGTI…APKILYAIGV (122 aa). The HTH crp-type domain occupies 158 to 230; that stretch reads LDVTDRIVRT…GKTVVLYGTR (73 aa). The segment at residues 190–209 is a DNA-binding region (H-T-H motif); the sequence is RQELARLVGCSREMAGRVLK.

In terms of assembly, homodimer.

The protein resides in the cytoplasm. Allosterically inhibited by cyclic di-GMP (c-di-GMP), which binds to Clp and abolishes its ability to bind its target gene promoter. Its function is as follows. Global transcriptional regulator that regulates virulence factors production by activating or repressing the expression of a large set of genes in diffusible signal factor (DSF) pathway. The protein is CRP-like protein Clp (clp) of Xanthomonas axonopodis pv. citri (strain 306).